The primary structure comprises 573 residues: Methionine--tRNA ligase (573 aa).

The 'HIGH' region signature appears at Pro10–Asn20. Residues Cys143, Cys146, Cys156, and Cys159 each contribute to the Zn(2+) site. Residues Lys333–Ser337 carry the 'KMSKS' region motif. An ATP-binding site is contributed by Lys336.

It belongs to the class-I aminoacyl-tRNA synthetase family. MetG type 1 subfamily. Zn(2+) serves as cofactor.

Its subcellular location is the cytoplasm. The enzyme catalyses tRNA(Met) + L-methionine + ATP = L-methionyl-tRNA(Met) + AMP + diphosphate. In terms of biological role, is required not only for elongation of protein synthesis but also for the initiation of all mRNA translation through initiator tRNA(fMet) aminoacylation. The protein is Methionine--tRNA ligase of Saccharolobus solfataricus (strain ATCC 35092 / DSM 1617 / JCM 11322 / P2) (Sulfolobus solfataricus).